Reading from the N-terminus, the 451-residue chain is Chromosomal replication initiator protein DnaA (451 aa).

The domain I, interacts with DnaA modulators stretch occupies residues 1–77; sequence MTENEQIFWN…EVYNAQISVD (77 aa). Positions 77–110 are domain II; sequence DYVFEEDLMIEQNQTKINQKPKQQALNSLPTVTS. Residues 111 to 329 are domain III, AAA+ region; sequence DLNSKYSFEN…GALKDISLVA (219 aa). ATP-binding residues include Gly-155, Gly-157, Lys-158, and Thr-159. The segment at 330-451 is domain IV, binds dsDNA; the sequence is NFKQIDTITV…EIETIKNKIK (122 aa).

The protein belongs to the DnaA family. Oligomerizes as a right-handed, spiral filament on DNA at oriC.

The protein resides in the cytoplasm. Its function is as follows. Plays an essential role in the initiation and regulation of chromosomal replication. ATP-DnaA binds to the origin of replication (oriC) to initiate formation of the DNA replication initiation complex once per cell cycle. Binds the DnaA box (a 9 base pair repeat at the origin) and separates the double-stranded (ds)DNA. Forms a right-handed helical filament on oriC DNA; dsDNA binds to the exterior of the filament while single-stranded (ss)DNA is stabiized in the filament's interior. The ATP-DnaA-oriC complex binds and stabilizes one strand of the AT-rich DNA unwinding element (DUE), permitting loading of DNA polymerase. After initiation quickly degrades to an ADP-DnaA complex that is not apt for DNA replication. Binds acidic phospholipids. The half-life of ATP-DnaA is 12 minutes at 37 degrees Celsius, in E.coli the half-life is about 41 minutes. The sequence is that of Chromosomal replication initiator protein DnaA from Streptococcus pyogenes serotype M1.